Consider the following 315-residue polypeptide: Transaldolase (315 aa).

K131 (schiff-base intermediate with substrate) is an active-site residue.

This sequence belongs to the transaldolase family. Type 1 subfamily. In terms of assembly, homodimer.

Its subcellular location is the cytoplasm. It carries out the reaction D-sedoheptulose 7-phosphate + D-glyceraldehyde 3-phosphate = D-erythrose 4-phosphate + beta-D-fructose 6-phosphate. Its pathway is carbohydrate degradation; pentose phosphate pathway; D-glyceraldehyde 3-phosphate and beta-D-fructose 6-phosphate from D-ribose 5-phosphate and D-xylulose 5-phosphate (non-oxidative stage): step 2/3. Transaldolase is important for the balance of metabolites in the pentose-phosphate pathway. The polypeptide is Transaldolase (Actinobacillus pleuropneumoniae serotype 5b (strain L20)).